Consider the following 364-residue polypeptide: MKVVIEADGGSRGNPGPAGYGAVVWTADHSTVLAESKQAIGRATNNVAEYRGLIAGLDDAVKLGATEAAVLMDSKLVVEQMSGRWKVKHPDLLKLYVQAQALASQFRRINYEWVPRARNTYADRLANDAMDAAAQSAAADADPAKIVATESPTSPGWTGARGTPTRLLLLRHGQTELSEQRRYSGRGNPGLNEVGWRQVGAAAGYLARRGGIAAVVSSPLQRAYDTAVTAARALALDVVVDDDLVETDFGAWEGLTFAEAAERDPELHRRWLQDTSITPPGGESFDDVLRRVRRGRDRIIVGYEGATVLVVSHVTPIKMLLRLALDAGSGVLYRLHLDLASLSIAEFYADGASSVRLVNQTGYL.

One can recognise an RNase H type-1 domain in the interval 1–139 (MKVVIEADGG…MDAAAQSAAA (139 aa)). Mg(2+) contacts are provided by D8, E49, D73, and D123. H172 functions as the Tele-phosphohistidine intermediate in the catalytic mechanism. E246 functions as the Proton donor/acceptor; for phosphatase activity in the catalytic mechanism.

The protein in the N-terminal section; belongs to the RNase H family. In the C-terminal section; belongs to the histidine phosphatase superfamily. The N-terminal domain alone is monomeric in solution but associates in the crystal to form a dimer. Mg(2+) serves as cofactor.

The catalysed reaction is Endonucleolytic cleavage to 5'-phosphomonoester.. The enzyme catalyses adenosylcob(III)alamin 5'-phosphate + H2O = adenosylcob(III)alamin + phosphate. It carries out the reaction alpha-ribazole 5'-phosphate + H2O = alpha-ribazole + phosphate. The protein operates within nucleoside biosynthesis; alpha-ribazole biosynthesis; alpha-ribazole from 5,6-dimethylbenzimidazole: step 2/2. Functionally, endonuclease that displays both RNase H activity with a hybrid RNA/DNA substrate as well as double-stranded RNase activity. As the only authenticated RNase HI in M.tuberculosis, probably plays an important role in the physiology of this organism, being likely involved in bacterial replication. In terms of biological role, catalyzes the hydrolysis of the phospho group from alpha-ribazole 5'-phosphate to form alpha-ribazole. May also catalyze the conversion of adenosylcobalamin 5'-phosphate to adenosylcobalamin (vitamin B12). Has a possible role in B12 recycling, but the primary role of the C-terminal domain of this phosphatase enzyme could be phosphate generation to help bacterial survival within the macrophage, which is a phosphate-deprived environment. The sequence is that of Bifunctional protein Rv2228c from Mycobacterium tuberculosis (strain ATCC 25618 / H37Rv).